The primary structure comprises 130 residues: Ribosome-binding factor A (130 aa).

Positions 111-130 are disordered; sequence RDLDDVGPGATSSDEDAEQR.

This sequence belongs to the RbfA family. Monomer. Binds 30S ribosomal subunits, but not 50S ribosomal subunits or 70S ribosomes.

The protein localises to the cytoplasm. In terms of biological role, one of several proteins that assist in the late maturation steps of the functional core of the 30S ribosomal subunit. Associates with free 30S ribosomal subunits (but not with 30S subunits that are part of 70S ribosomes or polysomes). Required for efficient processing of 16S rRNA. May interact with the 5'-terminal helix region of 16S rRNA. The sequence is that of Ribosome-binding factor A from Xanthomonas oryzae pv. oryzae (strain MAFF 311018).